The following is a 291-amino-acid chain: MFQKHLQKASDSVVGGTLYVVATPIGNLADITLRALAVLQKADIICAEDTRVTAQLLSAYGIQGKLVSVREHNERQMADKIVGYLSDGMVVAQVSDAGTPAVCDPGAKLARRVREAGFKVVPVVGASAVMAALSVAGVEGSDFYFNGFVPPKSGERRKLFAKWVRAAFPIVMFETPHRIGATLADMAELFPERRLMLAREITKTFETFLSGTVGEIQTALSADGNQSRGEMVLVLYPAQDEKHEGLSESAQNIMKILTAELPTKQAAELAAKITGEGKKALYDLALSWKNK.

Belongs to the methyltransferase superfamily. RsmI family.

It is found in the cytoplasm. The catalysed reaction is cytidine(1402) in 16S rRNA + S-adenosyl-L-methionine = 2'-O-methylcytidine(1402) in 16S rRNA + S-adenosyl-L-homocysteine + H(+). In terms of biological role, catalyzes the 2'-O-methylation of the ribose of cytidine 1402 (C1402) in 16S rRNA. The sequence is that of Ribosomal RNA small subunit methyltransferase I from Neisseria meningitidis serogroup B (strain ATCC BAA-335 / MC58).